The primary structure comprises 248 residues: 4-hydroxy-tetrahydrodipicolinate reductase (248 aa).

NAD(+)-binding positions include 74-76 and 99-102; these read GTT and SANF. The Proton donor/acceptor role is filled by H134. H135 provides a ligand contact to (S)-2,3,4,5-tetrahydrodipicolinate. The Proton donor role is filled by K138. 144–145 is a binding site for (S)-2,3,4,5-tetrahydrodipicolinate; sequence GT.

It belongs to the DapB family.

It is found in the cytoplasm. The catalysed reaction is (S)-2,3,4,5-tetrahydrodipicolinate + NAD(+) + H2O = (2S,4S)-4-hydroxy-2,3,4,5-tetrahydrodipicolinate + NADH + H(+). It carries out the reaction (S)-2,3,4,5-tetrahydrodipicolinate + NADP(+) + H2O = (2S,4S)-4-hydroxy-2,3,4,5-tetrahydrodipicolinate + NADPH + H(+). Its pathway is amino-acid biosynthesis; L-lysine biosynthesis via DAP pathway; (S)-tetrahydrodipicolinate from L-aspartate: step 4/4. In terms of biological role, catalyzes the conversion of 4-hydroxy-tetrahydrodipicolinate (HTPA) to tetrahydrodipicolinate. The polypeptide is 4-hydroxy-tetrahydrodipicolinate reductase (Chlorobium phaeobacteroides (strain DSM 266 / SMG 266 / 2430)).